Reading from the N-terminus, the 374-residue chain is Pulmonary surfactant-associated protein D (374 aa).

The signal sequence occupies residues 1–19 (MLPFLSMLVLLVQPLGNLG). S-nitrosocysteine is present on residues Cys-34 and Cys-39. Residues 38–222 (MCSPTENGLP…GIKGESGLPD (185 aa)) are disordered. The Collagen-like domain occupies 45–221 (GLPGRDGRDG…RGIKGESGLP (177 aa)). Basic and acidic residues predominate over residues 49–64 (RDGRDGREGPRGEKGD). Low complexity predominate over residues 70 to 79 (PMGLSGLQGP). Residue Asn-89 is glycosylated (N-linked (GlcNAc...) asparagine). 2 stretches are compositionally biased toward low complexity: residues 137–149 (KGEAGPKGEVGAP) and 169–200 (APGVQGAPGNAGAAGPAGPAGPQGAPGSRGPP). A compositionally biased stretch (basic and acidic residues) spans 203–215 (KGDRGVPGDRGIK). Residues 222-253 (DSAALRQQMEALKGKLQRLEVAFSHYQKAALF) are a coiled coil. The 116-residue stretch at 259–374 (VGDKIFRTAD…GEQRLVICEF (116 aa)) folds into the C-type lectin domain. Disulfide bonds link Cys-280-Cys-372 and Cys-350-Cys-364.

It belongs to the SFTPD family. Oligomeric complex of 4 set of homotrimers. Post-translationally, S-nitrosylation at Cys-34 and Cys-39 alters the quaternary structure which results in a pro-inflammatory chemoattractive signaling activity with macrophages.

The protein resides in the secreted. Its subcellular location is the extracellular space. The protein localises to the extracellular matrix. It localises to the surface film. Functionally, contributes to the lung's defense against inhaled microorganisms, organic antigens and toxins. Interacts with compounds such as bacterial lipopolysaccharides, oligosaccharides and fatty acids and modulates leukocyte action in immune response. May participate in the extracellular reorganization or turnover of pulmonary surfactant. Binds strongly maltose residues and to a lesser extent other alpha-glucosyl moieties. The protein is Pulmonary surfactant-associated protein D (Sftpd) of Mus musculus (Mouse).